A 248-amino-acid chain; its full sequence is Ubiquinone biosynthesis O-methyltransferase (248 aa).

S-adenosyl-L-methionine contacts are provided by R41, G72, D93, and M136.

The protein belongs to the methyltransferase superfamily. UbiG/COQ3 family.

It catalyses the reaction a 3-demethylubiquinol + S-adenosyl-L-methionine = a ubiquinol + S-adenosyl-L-homocysteine + H(+). The enzyme catalyses a 3-(all-trans-polyprenyl)benzene-1,2-diol + S-adenosyl-L-methionine = a 2-methoxy-6-(all-trans-polyprenyl)phenol + S-adenosyl-L-homocysteine + H(+). It functions in the pathway cofactor biosynthesis; ubiquinone biosynthesis. O-methyltransferase that catalyzes the 2 O-methylation steps in the ubiquinone biosynthetic pathway. This is Ubiquinone biosynthesis O-methyltransferase from Sinorhizobium medicae (strain WSM419) (Ensifer medicae).